The sequence spans 130 residues: Large ribosomal subunit protein bL17 (130 aa).

Belongs to the bacterial ribosomal protein bL17 family. In terms of assembly, part of the 50S ribosomal subunit. Contacts protein L32.

The protein is Large ribosomal subunit protein bL17 of Photorhabdus laumondii subsp. laumondii (strain DSM 15139 / CIP 105565 / TT01) (Photorhabdus luminescens subsp. laumondii).